A 250-amino-acid chain; its full sequence is MASRYDRAITVFSPDGHLFQVEYAQEAVKKGSTAVGIRGTNIVVLGVEKKSVAKLQDERTVRKICALDDHVCMAFAGLTADARVVINRARVECQSHKLTVEDPVTVEYITRFIATLKQKYTQSNGRRPFGISALIVGFDDDGIPRLYQTDPSGTYHAWKANAIGRSAKTVREFLEKNYTEDAIASDNEAIKLAIKALLEVVQSGGKNIELAIIRRNQPLKMFSAKEVELYVTEIEKEKEEAEKKKSKKSV.

The O-linked (GlcNAc) serine glycan is linked to Ser-132.

It belongs to the peptidase T1A family. In terms of assembly, the 26S proteasome consists of a 20S proteasome core and two 19S regulatory subunits. The 20S proteasome core is a barrel-shaped complex made of 28 subunits that are arranged in four stacked rings. The two outer rings are each formed by seven alpha subunits, and the two inner rings are formed by seven beta subunits. The proteolytic activity is exerted by three beta-subunits PSMB5, PSMB6 and PSMB7. PSMA7 interacts directly with the PSMG1-PSMG2 heterodimer which promotes 20S proteasome assembly. Interacts with HIF1A. Interacts with RAB7A. Interacts with PRKN. Interacts with ABL1 and ABL2. Interacts with EMAP2. Interacts with MAVS.

Its subcellular location is the cytoplasm. The protein localises to the nucleus. Component of the 20S core proteasome complex involved in the proteolytic degradation of most intracellular proteins. This complex plays numerous essential roles within the cell by associating with different regulatory particles. Associated with two 19S regulatory particles, forms the 26S proteasome and thus participates in the ATP-dependent degradation of ubiquitinated proteins. The 26S proteasome plays a key role in the maintenance of protein homeostasis by removing misfolded or damaged proteins that could impair cellular functions, and by removing proteins whose functions are no longer required. Associated with the PA200 or PA28, the 20S proteasome mediates ubiquitin-independent protein degradation. This type of proteolysis is required in several pathways including spermatogenesis (20S-PA200 complex) or generation of a subset of MHC class I-presented antigenic peptides (20S-PA28 complex). Inhibits the transactivation function of HIF-1A under both normoxic and hypoxia-mimicking conditions. The interaction with EMAP2 increases the proteasome-mediated HIF-1A degradation under the hypoxic conditions. Plays a role in hepatitis C virus internal ribosome entry site-mediated translation. Mediates nuclear translocation of the androgen receptor (AR) and thereby enhances androgen-mediated transactivation. Promotes MAVS degradation and thereby negatively regulates MAVS-mediated innate immune response. The sequence is that of Proteasome subunit alpha type-7-like (PSMA7L) from Macaca fascicularis (Crab-eating macaque).